A 105-amino-acid chain; its full sequence is Thioredoxin (105 aa).

The 104-residue stretch at 2-105 folds into the Thioredoxin domain; that stretch reads VKQIESKSAF…KLEATINELL (104 aa). K3 carries the N6-acetyllysine modification. K8 carries the post-translational modification N6-succinyllysine. Catalysis depends on nucleophile residues C32 and C35. A disulfide bridge connects residues C32 and C35. K39 carries the N6-acetyllysine modification. C62 and C69 each carry S-nitrosocysteine. C73 is modified (S-nitrosocysteine; alternate). An N6-acetyllysine; alternate modification is found at K94. N6-succinyllysine; alternate is present on K94.

The protein belongs to the thioredoxin family. Homodimer; disulfide-linked. Interacts with TXNIP through the redox-active site. Interacts with MAP3K5 and CASP3. Interacts with APEX1; the interaction stimulates the FOS/JUN AP-1 DNA-binding activity in a redox-dependent manner. In terms of processing, in the fully reduced protein, both Cys-69 and Cys-73 are nitrosylated in response to nitric oxide (NO). When two disulfide bonds are present in the protein, only Cys-73 is nitrosylated. Cys-73 can serve as donor for nitrosylation of target proteins.

It is found in the nucleus. The protein localises to the cytoplasm. It localises to the secreted. Its function is as follows. Participates in various redox reactions through the reversible oxidation of its active center dithiol to a disulfide and catalyzes dithiol-disulfide exchange reactions. Plays a role in the reversible S-nitrosylation of cysteine residues in target proteins, and thereby contributes to the response to intracellular nitric oxide. Nitrosylates the active site Cys of CASP3 in response to nitric oxide (NO), and thereby inhibits caspase-3 activity. Induces the FOS/JUN AP-1 DNA binding activity in ionizing radiation (IR) cells through its oxidation/reduction status and stimulates AP-1 transcriptional activity. The sequence is that of Thioredoxin (TXN) from Oryctolagus cuniculus (Rabbit).